Consider the following 270-residue polypeptide: MDNKIVYVVSDSVGETADLVVRAAMGQFPFAPDIRRVPYVEDTGTLKEVISIAKSNQALICFTLVKPDMRQYLVTEAAKEGVEAYDIIGPLIDQIEEITGQVPRYEPGVVRRLDEEYFKKIEAIEFAVKYDDGRDARGILKADIVLIGISRTSKTPLSQYLAHNKRLKVANVPLVPEVDPPEELYQVAKEKCFGLKITPEKLNHIRKERLKSLGLSDGATYANINRIKEEIDHFENVVSKINCQVIDVSNKAIEETANIIVNAVQNQKMF.

148-155 (GISRTSKT) serves as a coordination point for ADP.

Belongs to the pyruvate, phosphate/water dikinase regulatory protein family. PDRP subfamily.

The enzyme catalyses N(tele)-phospho-L-histidyl/L-threonyl-[pyruvate, phosphate dikinase] + ADP = N(tele)-phospho-L-histidyl/O-phospho-L-threonyl-[pyruvate, phosphate dikinase] + AMP + H(+). The catalysed reaction is N(tele)-phospho-L-histidyl/O-phospho-L-threonyl-[pyruvate, phosphate dikinase] + phosphate + H(+) = N(tele)-phospho-L-histidyl/L-threonyl-[pyruvate, phosphate dikinase] + diphosphate. In terms of biological role, bifunctional serine/threonine kinase and phosphorylase involved in the regulation of the pyruvate, phosphate dikinase (PPDK) by catalyzing its phosphorylation/dephosphorylation. This chain is Putative pyruvate, phosphate dikinase regulatory protein, found in Bacillus cereus (strain AH187).